The primary structure comprises 859 residues: MMMNSHFAGVGDNVDKEAYGHGIQVVDEDKVFNNNLSTYLNIEKVIPAGFNYHLISVFGSQSTGKSTLLNYLFGTQFGVMAEQERRQTTKGIWMSKNKRPEGGSAMAENILVMDVEGTDGRERGEDQDFERKSALFALATSEVLIVNIWEHQVGLYQGANMGLLKTVFEVNLQLFIKDSKTIPKSLLFFVIRDHLGTTPLKNLQNTLTQDLSKLWSTISKPKGLENSRIEEYFDFAFVALPHKILQPEKFEEAVTKLSLRFKEGYNDPKTSGLVDEAELPIFQPQYHRRIPADGFPAYAEGIWDQIVHNKDLDLPTQQELLAQFRCDEISREVLVLFDETIAPLEEKQAEDTRMGKPSVIAELGAAMNAARSTVFKDFETNASRYHKGVYKRKQAELEGKVDTRLKALSQKQLNAAHKSGVESFSDAVSAAVKAGQKKGASYDFAQIVDSEKKKAIAQFGEQAKSIVIEGASWSSFEHELKVYRKDLDDVSGRLRKDEMRRLATRIERWVRSRLDESVGLEFNKLGTGRGGSGAPEHGERPPSEKDLWDRVWAIFTETVSSAEKRFTDRAQSFDASPEEVDVGLWRLRRKSWGVLRAKIDEEVMEGNILLKLRENFEDKFRYDEQGVPRIWRPTDDIEGIYTKARESTITVIPLLARFKLSKTSAPPPLDAWIGDAPASVTPADEEDLTPIGGLDEEEGKSLEEEMTVLSDAKQADLLIRFKKTADGVYVEAKRSAIGGITQVPLYFYGLLVALGWNEIVAVLRNPVYFIFLILCAVGAYVTYTLNLWGPMIRMGNAASAQALEVGKERLREFLESSESGRQAMAMSGNQPRGESVRMNRLNGNGKKDEDAEVEDLDDI.

The Cytoplasmic segment spans residues 1–742; the sequence is MMMNSHFAGV…KRSAIGGITQ (742 aa). The region spanning 49-291 is the GB1/RHD3-type G domain; that stretch reads GFNYHLISVF…FQPQYHRRIP (243 aa). 59–66 provides a ligand contact to GTP; the sequence is GSQSTGKS. Residues 476–496 are a coiled coil; it reads FEHELKVYRKDLDDVSGRLRK. Positions 525–544 are disordered; it reads LGTGRGGSGAPEHGERPPSE. Residues 743 to 763 form a helical membrane-spanning segment; it reads VPLYFYGLLVALGWNEIVAVL. Topologically, residues 764-766 are lumenal; that stretch reads RNP. The helical transmembrane segment at 767–787 threads the bilayer; the sequence is VYFIFLILCAVGAYVTYTLNL. Over 788–859 the chain is Cytoplasmic; that stretch reads WGPMIRMGNA…DAEVEDLDDI (72 aa). The interval 816 to 859 is disordered; sequence SSESGRQAMAMSGNQPRGESVRMNRLNGNGKKDEDAEVEDLDDI. Acidic residues predominate over residues 850 to 859; the sequence is DAEVEDLDDI.

It belongs to the TRAFAC class dynamin-like GTPase superfamily. GB1/RHD3 GTPase family. RHD3 subfamily.

The protein resides in the endoplasmic reticulum membrane. In terms of biological role, cooperates with the reticulon proteins and tubule-shaping DP1 family proteins to generate and maintain the structure of the tubular endoplasmic reticulum network. Has GTPase activity, which is required for its function in ER organization. The sequence is that of Protein SEY1 from Phaeosphaeria nodorum (strain SN15 / ATCC MYA-4574 / FGSC 10173) (Glume blotch fungus).